The sequence spans 202 residues: dTTP/UTP pyrophosphatase (202 aa).

D76 (proton acceptor) is an active-site residue.

Belongs to the Maf family. YhdE subfamily. A divalent metal cation serves as cofactor.

The protein localises to the cytoplasm. The catalysed reaction is dTTP + H2O = dTMP + diphosphate + H(+). It catalyses the reaction UTP + H2O = UMP + diphosphate + H(+). Functionally, nucleoside triphosphate pyrophosphatase that hydrolyzes dTTP and UTP. May have a dual role in cell division arrest and in preventing the incorporation of modified nucleotides into cellular nucleic acids. In Neisseria gonorrhoeae (strain ATCC 700825 / FA 1090), this protein is dTTP/UTP pyrophosphatase.